The chain runs to 242 residues: N-glycosylase/DNA lyase (242 aa).

8-oxoguanine is bound by residues Gln25, Ser52, and Trp63. A helix-hairpin-helix region spans residues Lys119–Arg183. The active-site Schiff-base intermediate with DNA is the Lys143. Phe147 and Pro173 together coordinate 8-oxoguanine. Asp175 is a catalytic residue. 2 residues coordinate 8-oxoguanine: Asp209 and Trp213.

This sequence belongs to the archaeal N-glycosylase/DNA lyase (AGOG) family.

The enzyme catalyses 2'-deoxyribonucleotide-(2'-deoxyribose 5'-phosphate)-2'-deoxyribonucleotide-DNA = a 3'-end 2'-deoxyribonucleotide-(2,3-dehydro-2,3-deoxyribose 5'-phosphate)-DNA + a 5'-end 5'-phospho-2'-deoxyribonucleoside-DNA + H(+). DNA repair enzyme that is part of the base excision repair (BER) pathway; protects from oxidative damage by removing the major product of DNA oxidation, 8-oxoguanine (GO), from single- and double-stranded DNA substrates. In Methanopyrus kandleri (strain AV19 / DSM 6324 / JCM 9639 / NBRC 100938), this protein is N-glycosylase/DNA lyase.